The primary structure comprises 477 residues: MKVTLPEFERAGVMVVGDVMLDRYWYGPTSRISPEAPVPVVKVNTIEERPGGAANVAMNIASLGANARLVGLTGIDDAARALSKSLADVNVKCDFVSVPTHPTITKLRVLSRNQQLIRLDFEEGFEGVDPQPLHERINQALSSIGALVLSDYAKGALASVQQMIQLARKAGVPVLIDPKGTDFERYRGATLLTPNLSEFEAVVGKCKTEEEIVERGMKLIADYELSALLVTRSEQGMSLLQPGKAPLHMPTQAQEVYDVTGAGDTVIGVLAATLAAGNSLEEACFFANAAAGVVVGKLGTSTVSPIELENAVRGRADTGFGVMTEEELKLAVAAARKRGEKVVMTNGVFDILHAGHVSYLANARKLGDRLIVAVNSDASTKRLKGDSRPVNPLEQRMIVLGALEAVDWVVSFEEDTPQRLIAGILPDLLVKGGDYKPEEIAGSKEVWANGGEVLVLNFEDGCSTTNIIKKIQLDKKG.

The segment at 1-318 (MKVTLPEFER…ENAVRGRADT (318 aa)) is ribokinase. K179 is modified (N6-acetyllysine). Residue 195-198 (NLSE) coordinates ATP. The active site involves D264. The segment at 344 to 477 (MTNGVFDILH…IKKIQLDKKG (134 aa)) is cytidylyltransferase.

The protein in the N-terminal section; belongs to the carbohydrate kinase PfkB family. In the C-terminal section; belongs to the cytidylyltransferase family. In terms of assembly, homodimer.

The enzyme catalyses D-glycero-beta-D-manno-heptose 7-phosphate + ATP = D-glycero-beta-D-manno-heptose 1,7-bisphosphate + ADP + H(+). It carries out the reaction D-glycero-beta-D-manno-heptose 1-phosphate + ATP + H(+) = ADP-D-glycero-beta-D-manno-heptose + diphosphate. It participates in nucleotide-sugar biosynthesis; ADP-L-glycero-beta-D-manno-heptose biosynthesis; ADP-L-glycero-beta-D-manno-heptose from D-glycero-beta-D-manno-heptose 7-phosphate: step 1/4. It functions in the pathway nucleotide-sugar biosynthesis; ADP-L-glycero-beta-D-manno-heptose biosynthesis; ADP-L-glycero-beta-D-manno-heptose from D-glycero-beta-D-manno-heptose 7-phosphate: step 3/4. Functionally, catalyzes the phosphorylation of D-glycero-D-manno-heptose 7-phosphate at the C-1 position to selectively form D-glycero-beta-D-manno-heptose-1,7-bisphosphate. Its function is as follows. Catalyzes the ADP transfer from ATP to D-glycero-beta-D-manno-heptose 1-phosphate, yielding ADP-D-glycero-beta-D-manno-heptose. The polypeptide is Bifunctional protein HldE (Escherichia coli O81 (strain ED1a)).